Here is a 244-residue protein sequence, read N- to C-terminus: 5-oxoprolinase subunit A (244 aa).

This sequence belongs to the LamB/PxpA family. Forms a complex composed of PxpA, PxpB and PxpC.

It carries out the reaction 5-oxo-L-proline + ATP + 2 H2O = L-glutamate + ADP + phosphate + H(+). Its function is as follows. Catalyzes the cleavage of 5-oxoproline to form L-glutamate coupled to the hydrolysis of ATP to ADP and inorganic phosphate. In Salmonella paratyphi C (strain RKS4594), this protein is 5-oxoprolinase subunit A.